Here is a 345-residue protein sequence, read N- to C-terminus: Baculoviral IAP repeat-containing protein 7-B (345 aa).

2 BIR repeats span residues 46–112 and 154–219; these read RQRS…PFLQ and RLGS…DFLL. Zn(2+) is bound by residues Cys-188, Cys-191, His-208, and Cys-215. Phosphoserine is present on Ser-237. Ser-241 carries the post-translational modification Phosphoserine; by MAPK1. Ser-253 is subject to Phosphoserine. Phosphoserine; by MAPK1 is present on Ser-257. The interval 258-286 is disordered; the sequence is TESVSVPRAPTPGERSEPPKVSGPPLSTE. Residues 298–333 form an RING-type zinc finger; sequence CKVCMDKDVSMLFVPCGHLVVCTECAPNLRHCPICR.

This sequence belongs to the IAP family. In terms of processing, auto-ubiquitinated, and degraded in a 2-step mechanism; a caspase-independent first step and a caspase-dependent second step. Phosphorylated via MAPK-dependent and CDK-dependent pathways during oocyte maturation. Phosphorylation does not appear to affect caspase inhibition or autoubiquitination activity.

The protein resides in the cytoplasm. It catalyses the reaction S-ubiquitinyl-[E2 ubiquitin-conjugating enzyme]-L-cysteine + [acceptor protein]-L-lysine = [E2 ubiquitin-conjugating enzyme]-L-cysteine + N(6)-ubiquitinyl-[acceptor protein]-L-lysine.. Its function is as follows. Weak apoptotic suppressor. Has E3 ubiquitin-protein ligase activity. Weak inhibitor of caspase activity. This Xenopus laevis (African clawed frog) protein is Baculoviral IAP repeat-containing protein 7-B (birc7-b).